The following is a 168-amino-acid chain: G/U mismatch-specific DNA glycosylase (168 aa).

This sequence belongs to the uracil-DNA glycosylase (UDG) superfamily. TDG/mug family. Binds DNA as a monomer.

It localises to the cytoplasm. It catalyses the reaction Specifically hydrolyzes mismatched double-stranded DNA and polynucleotides, releasing free uracil.. Excises ethenocytosine and uracil, which can arise by alkylation or deamination of cytosine, respectively, from the corresponding mispairs with guanine in ds-DNA. It is capable of hydrolyzing the carbon-nitrogen bond between the sugar-phosphate backbone of the DNA and the mispaired base. The complementary strand guanine functions in substrate recognition. Required for DNA damage lesion repair in stationary-phase cells. This is G/U mismatch-specific DNA glycosylase from Salmonella paratyphi B (strain ATCC BAA-1250 / SPB7).